A 37-amino-acid chain; its full sequence is Large ribosomal subunit protein bL36 (37 aa).

The protein belongs to the bacterial ribosomal protein bL36 family.

The sequence is that of Large ribosomal subunit protein bL36 from Aliarcobacter butzleri (strain RM4018) (Arcobacter butzleri).